We begin with the raw amino-acid sequence, 205 residues long: Protein phosphatase inhibitor 2 (205 aa).

Disordered regions lie at residues 1–46 (MAAS…KSQK) and 64–205 (GLMK…SQSS). A2 bears the N-acetylalanine mark. Required for binding PPP1CC stretches follow at residues 12-17 (KGILKN) and 43-55 (KSQK…ILAT). Polar residues predominate over residues 17-26 (NKTSSTSSRV). Positions 35–46 (SVDEELSKKSQK) are enriched in basic and acidic residues. S44 carries the phosphoserine; by ATM modification. At T73 the chain carries Phosphothreonine; by GSK3. Acidic residues predominate over residues 80–91 (GDDDDAYSDTET). S87 carries the post-translational modification Phosphoserine. Phosphothreonine occurs at positions 89, 92, and 96. Basic and acidic residues predominate over residues 110-120 (SEPKYRIREQE). Phosphoserine is present on residues S121, S122, S127, and S130. Acidic residues predominate over residues 121 to 130 (SSGEEDSDLS). Positions 131 to 143 (PEEREKKRQFEMK) are enriched in basic and acidic residues. The tract at residues 147–150 (HYNE) is required for binding PPP1CC catalytic center, displacing metal ions and inhibition of PPP1CC catalytic activity. Over residues 167–179 (DDEEDEEMSETAD) the composition is skewed to acidic residues. Residues 182–205 (SMNTEESNQGSTPSDQRQNKSQSS) show a composition bias toward polar residues.

This sequence belongs to the protein phosphatase inhibitor 2 family. As to quaternary structure, heterodimer with PP1. Phosphorylation on Ser-44 by ATM activates PP1 by dissociating the PP1-PPP1R2 complex. Phosphorylation on Thr-73 by GSK3 activates PP1 by dissociating the PP1-PPP1R2 complex.

Inhibitor of protein-phosphatase 1. This Oryctolagus cuniculus (Rabbit) protein is Protein phosphatase inhibitor 2 (PPP1R2).